The primary structure comprises 719 residues: Acyl-coenzyme A oxidase (719 aa).

A Microbody targeting signal motif is present at residues 716–719; it reads APKI.

Belongs to the acyl-CoA oxidase family. Requires FAD as cofactor.

The protein localises to the peroxisome. The enzyme catalyses a 2,3-saturated acyl-CoA + O2 = a (2E)-enoyl-CoA + H2O2. It functions in the pathway lipid metabolism; peroxisomal fatty acid beta-oxidation. This is Acyl-coenzyme A oxidase (POX1) from Komagataella pastoris (Yeast).